Reading from the N-terminus, the 315-residue chain is Ribosomal protein L11 methyltransferase (315 aa).

Residues Thr161, Gly182, Asp204, and Asn248 each coordinate S-adenosyl-L-methionine.

Belongs to the methyltransferase superfamily. PrmA family.

Its subcellular location is the cytoplasm. It catalyses the reaction L-lysyl-[protein] + 3 S-adenosyl-L-methionine = N(6),N(6),N(6)-trimethyl-L-lysyl-[protein] + 3 S-adenosyl-L-homocysteine + 3 H(+). In terms of biological role, methylates ribosomal protein L11. In Shouchella clausii (strain KSM-K16) (Alkalihalobacillus clausii), this protein is Ribosomal protein L11 methyltransferase.